Here is a 749-residue protein sequence, read N- to C-terminus: 1,4-alpha-glucan branching enzyme GlgB (749 aa).

The active-site Nucleophile is the aspartate 415. Glutamate 468 (proton donor) is an active-site residue.

It belongs to the glycosyl hydrolase 13 family. GlgB subfamily. Monomer.

It carries out the reaction Transfers a segment of a (1-&gt;4)-alpha-D-glucan chain to a primary hydroxy group in a similar glucan chain.. Its pathway is glycan biosynthesis; glycogen biosynthesis. In terms of biological role, catalyzes the formation of the alpha-1,6-glucosidic linkages in glycogen by scission of a 1,4-alpha-linked oligosaccharide from growing alpha-1,4-glucan chains and the subsequent attachment of the oligosaccharide to the alpha-1,6 position. The sequence is that of 1,4-alpha-glucan branching enzyme GlgB from Nitrosococcus oceani (strain ATCC 19707 / BCRC 17464 / JCM 30415 / NCIMB 11848 / C-107).